The primary structure comprises 211 residues: Thymidylate kinase (211 aa).

Position 11-18 (11-18 (GPDGAGKT)) interacts with ATP.

The protein belongs to the thymidylate kinase family.

The catalysed reaction is dTMP + ATP = dTDP + ADP. In terms of biological role, phosphorylation of dTMP to form dTDP in both de novo and salvage pathways of dTTP synthesis. In Streptococcus pyogenes serotype M6 (strain ATCC BAA-946 / MGAS10394), this protein is Thymidylate kinase.